We begin with the raw amino-acid sequence, 694 residues long: Putative serine/threonine-protein kinase R679 (694 aa).

A Protein kinase domain is found at 167 to 548 (ITKNKTVGKG…ITNILKHLFT (382 aa)). ATP contacts are provided by residues 173–181 (VGKGAAGIA) and lysine 196. Residue aspartate 395 is the Proton acceptor of the active site.

The protein belongs to the protein kinase superfamily. Ser/Thr protein kinase family.

The protein resides in the virion. It carries out the reaction L-seryl-[protein] + ATP = O-phospho-L-seryl-[protein] + ADP + H(+). The catalysed reaction is L-threonyl-[protein] + ATP = O-phospho-L-threonyl-[protein] + ADP + H(+). The polypeptide is Putative serine/threonine-protein kinase R679 (Acanthamoeba polyphaga (Amoeba)).